A 261-amino-acid polypeptide reads, in one-letter code: 14-3-3-like protein B (261 aa).

A disordered region spans residues 237-261 (DIPEDGEDSQKANGTAKFGGGDDAE).

Belongs to the 14-3-3 family.

This chain is 14-3-3-like protein B, found in Vicia faba (Broad bean).